A 352-amino-acid chain; its full sequence is UDP-N-acetylglucosamine--N-acetylmuramyl-(pentapeptide) pyrophosphoryl-undecaprenol N-acetylglucosamine transferase 2 (352 aa).

Residues 11–13, R164, S194, and Q289 contribute to the UDP-N-acetyl-alpha-D-glucosamine site; that span reads SAG.

The protein belongs to the glycosyltransferase 28 family. MurG subfamily.

It is found in the cell membrane. The catalysed reaction is di-trans,octa-cis-undecaprenyl diphospho-N-acetyl-alpha-D-muramoyl-L-alanyl-D-glutamyl-meso-2,6-diaminopimeloyl-D-alanyl-D-alanine + UDP-N-acetyl-alpha-D-glucosamine = di-trans,octa-cis-undecaprenyl diphospho-[N-acetyl-alpha-D-glucosaminyl-(1-&gt;4)]-N-acetyl-alpha-D-muramoyl-L-alanyl-D-glutamyl-meso-2,6-diaminopimeloyl-D-alanyl-D-alanine + UDP + H(+). It functions in the pathway cell wall biogenesis; peptidoglycan biosynthesis. Functionally, cell wall formation. Catalyzes the transfer of a GlcNAc subunit on undecaprenyl-pyrophosphoryl-MurNAc-pentapeptide (lipid intermediate I) to form undecaprenyl-pyrophosphoryl-MurNAc-(pentapeptide)GlcNAc (lipid intermediate II). The polypeptide is UDP-N-acetylglucosamine--N-acetylmuramyl-(pentapeptide) pyrophosphoryl-undecaprenol N-acetylglucosamine transferase 2 (Bacillus anthracis).